We begin with the raw amino-acid sequence, 649 residues long: Beta-galactosidase-1-like protein 3 (649 aa).

Residue Glu-203 is the Proton donor of the active site. The Nucleophile role is filled by Glu-277.

The protein belongs to the glycosyl hydrolase 35 family.

The chain is Beta-galactosidase-1-like protein 3 (Glb1l3) from Mus musculus (Mouse).